The sequence spans 316 residues: Ribosomal RNA small subunit methyltransferase H (316 aa).

S-adenosyl-L-methionine is bound by residues 35-37, Asp55, Phe79, Asp101, and Gln108; that span reads GGH. The interval 291–316 is disordered; the sequence is AIKPSKDEVDENTRSRSSVLRIAEKL. Residues 294 to 304 show a composition bias toward basic and acidic residues; sequence PSKDEVDENTR.

It belongs to the methyltransferase superfamily. RsmH family.

It is found in the cytoplasm. The enzyme catalyses cytidine(1402) in 16S rRNA + S-adenosyl-L-methionine = N(4)-methylcytidine(1402) in 16S rRNA + S-adenosyl-L-homocysteine + H(+). In terms of biological role, specifically methylates the N4 position of cytidine in position 1402 (C1402) of 16S rRNA. This chain is Ribosomal RNA small subunit methyltransferase H, found in Vibrio atlanticus (strain LGP32) (Vibrio splendidus (strain Mel32)).